A 329-amino-acid chain; its full sequence is Mas-related G-protein coupled receptor member X2 (329 aa).

Residues 1 to 33 (MDPTTPAWGTESTTMDGNDQSLPLLCDKEALIP) are Extracellular-facing. Residues 34-54 (VFLILFIALVGLVGNGFVLWL) traverse the membrane as a helical segment. Residues 55–63 (LGFRMSRNA) lie on the Cytoplasmic side of the membrane. Residues 64–84 (FSVYVLSLAGADFLFLCFQII) traverse the membrane as a helical segment. Residues 85-96 (NCLVYLRDFFCS) lie on the Extracellular side of the membrane. A helical membrane pass occupies residues 97–117 (ISINFPSXFTTVMTCAYLAGL). The Cytoplasmic portion of the chain corresponds to 118 to 144 (SMLSTISTERCLSVLWPIWYRCRRPRH). Residues 145–165 (LSAVVCVLLWALSLLLSILEG) form a helical membrane-spanning segment. At 166–184 (KFCGFLFSDGDFGWCQIFD) the chain is on the extracellular side. The helical transmembrane segment at 185–205 (FITAAWLIFLFVVLCASSLAL) threads the bilayer. At 206 to 228 (LVRILCGSRGLPLTRLYLTILLT) the chain is on the cytoplasmic side. A helical membrane pass occupies residues 229–249 (VLVFLLCGLPFGIQWFLILGF). The Extracellular portion of the chain corresponds to 250–263 (WNSDVLLCHIHLVS). The helical transmembrane segment at 264–284 (VVLSSLNSSANPIIYFFVGSF) threads the bilayer. Topologically, residues 285 to 329 (RKQWRLQQPILKLAFQRALQDTAEVDHSEGCFPQGTSEMSRSSLV) are cytoplasmic.

It belongs to the G-protein coupled receptor 1 family. Mas subfamily.

It localises to the cell membrane. In terms of biological role, mast cell-specific receptor for basic secretagogues, i.e. cationic amphiphilic drugs, as well as endo- or exogenous peptides, consisting of a basic head group and a hydrophobic core. Recognizes and binds small molecules containing a cyclized tetrahydroisoquinoline (THIQ), such as non-steroidal neuromuscular blocking drugs (NMBDs), including tubocurarine and atracurium. In response to these compounds, mediates pseudo-allergic reactions characterized by histamine release, inflammation and airway contraction. This Hoolock hoolock (Western hoolock gibbon) protein is Mas-related G-protein coupled receptor member X2 (MRGPRX2).